The sequence spans 93 residues: Putative membrane protein insertion efficiency factor (93 aa).

The tract at residues 72 to 93 is disordered; the sequence is VPEHFPSWRGPHPKTPSRKTPE. A compositionally biased stretch (basic residues) spans 82–93; it reads PHPKTPSRKTPE.

This sequence belongs to the UPF0161 family.

The protein localises to the cell membrane. Functionally, could be involved in insertion of integral membrane proteins into the membrane. This chain is Putative membrane protein insertion efficiency factor, found in Deinococcus geothermalis (strain DSM 11300 / CIP 105573 / AG-3a).